The sequence spans 477 residues: Aspartyl/glutamyl-tRNA(Asn/Gln) amidotransferase subunit B (477 aa).

This sequence belongs to the GatB/GatE family. GatB subfamily. Heterotrimer of A, B and C subunits.

The enzyme catalyses L-glutamyl-tRNA(Gln) + L-glutamine + ATP + H2O = L-glutaminyl-tRNA(Gln) + L-glutamate + ADP + phosphate + H(+). It catalyses the reaction L-aspartyl-tRNA(Asn) + L-glutamine + ATP + H2O = L-asparaginyl-tRNA(Asn) + L-glutamate + ADP + phosphate + 2 H(+). In terms of biological role, allows the formation of correctly charged Asn-tRNA(Asn) or Gln-tRNA(Gln) through the transamidation of misacylated Asp-tRNA(Asn) or Glu-tRNA(Gln) in organisms which lack either or both of asparaginyl-tRNA or glutaminyl-tRNA synthetases. The reaction takes place in the presence of glutamine and ATP through an activated phospho-Asp-tRNA(Asn) or phospho-Glu-tRNA(Gln). The sequence is that of Aspartyl/glutamyl-tRNA(Asn/Gln) amidotransferase subunit B from Oenococcus oeni (strain ATCC BAA-331 / PSU-1).